The chain runs to 322 residues: MPITRMRMRPWLEMQINSNQIPGLIWINKEEMIFQIPWKHAAKHGWDINKDACLFRSWAIHTGRYKAGEKEPDPKTWKANFRCAMNSLPDIEEVKDQSRNKGSSAVRVYRMLPPLTKSQRKERKSKSSRDARSKAKKKPYGEYSPDTFSDGLSSSTLPDDHSNYTVRSYMGQDLDIERTLTPALSPCGVSSTLPNWSIPVEIVPDSTSDLYNFQVSPMPSTSEAATDEDEEGKLTEDIMKLLEQTGWQQTSVDGKGYLLNEPGAQPTSVYGEFSCKEEPEVDSPGGYIGLISSDMKNMDPSLLDSLLTPVRLPSIQAIPCAP.

The IRF tryptophan pentad repeat DNA-binding region spans 5 to 113 (RMRMRPWLEM…SAVRVYRMLP (109 aa)). Lys78 bears the N6-acetyllysine mark. The tract at residues 92 to 164 (EEVKDQSRNK…STLPDDHSNY (73 aa)) is disordered. A compositionally biased stretch (polar residues) spans 146 to 157 (DTFSDGLSSSTL). Residues Lys276 and Lys296 each participate in a glycyl lysine isopeptide (Lys-Gly) (interchain with G-Cter in SUMO) cross-link.

Belongs to the IRF family. As to quaternary structure, monomer. Homodimer. Interacts with EP300. Interacts with MYD88. Interacts with PIAS3. Interacts with SPOP. Post-translationally, phosphorylated by CK2 and this positively regulates its activity. Sumoylation represses the transcriptional activity and displays enhanced resistance to protein degradation. Sumoylated by UBE2I/UBC9 and SUMO1. Inactivates the tumor suppressor activity. Elevated levels in tumor cells. Major site is Lys-276. Sumoylation is enhanced by PIAS3. Desumoylated by SENP1 in tumor cells and appears to compete with ubiquitination on C-terminal sites. In terms of processing, ubiquitinated in a SPOP-depedent manner. Appears to compete with sumoylation on C-terminal sites.

The protein resides in the nucleus. The protein localises to the cytoplasm. Its activity is regulated as follows. Activated by MYD88. Its function is as follows. Transcriptional regulator which displays a remarkable functional diversity in the regulation of cellular responses. Regulates transcription of IFN and IFN-inducible genes, host response to viral and bacterial infections, regulation of many genes expressed during hematopoiesis, inflammation, immune responses and cell proliferation and differentiation, regulation of the cell cycle and induction of growth arrest and programmed cell death following DNA damage. Stimulates both innate and acquired immune responses through the activation of specific target genes and can act as a transcriptional activator and repressor regulating target genes by binding to an interferon-stimulated response element (ISRE) in their promoters. Has an essentail role in IFNG-dependent immunity to mycobacteria. Binds to a consensus sequence in gene promoters. Its target genes for transcriptional activation activity include: genes involved in anti-viral response, such as IFN-alpha/beta, RIGI, TNFSF10/TRAIL, ZBP1, OAS1/2, PIAS1/GBP, EIF2AK2/PKR and RSAD2/viperin; antibacterial response, such as GBP2, GBP5 and NOS2/INOS; anti-proliferative response, such as p53/TP53, LOX and CDKN1A; apoptosis, such as BBC3/PUMA, CASP1, CASP7 and CASP8; immune response, such as IL7, IL12A/B and IL15, PTGS2/COX2 and CYBB; DNA damage responses and DNA repair, such as POLQ/POLH; MHC class I expression, such as TAP1, PSMB9/LMP2, PSME1/PA28A, PSME2/PA28B and B2M and MHC class II expression, such as CIITA; metabolic enzymes, such as ACOD1/IRG1. Represses genes involved in anti-proliferative response, such as BIRC5/survivin, CCNB1, CCNE1, CDK1, CDK2 and CDK4 and in immune response, such as FOXP3, IL4, ANXA2 and TLR4. Stimulates p53/TP53-dependent transcription through enhanced recruitment of EP300 leading to increased acetylation of p53/TP53. Plays an important role in immune response directly affecting NK maturation and activity, macrophage production of IL12, Th1 development and maturation of CD8+ T-cells. Also implicated in the differentiation and maturation of dendritic cells and in the suppression of regulatory T (Treg) cells development. Acts as a tumor suppressor and plays a role not only in antagonism of tumor cell growth but also in stimulating an immune response against tumor cells. In Bos taurus (Bovine), this protein is Interferon regulatory factor 1 (IRF1).